The sequence spans 622 residues: Low affinity potassium transport system protein Kup (622 aa).

The next 12 helical transmembrane spans lie at 9 to 29 (LPAI…TSPL), 49 to 69 (VFGF…IKYL), 103 to 123 (VIMG…TPAI), 137 to 157 (PQLD…LFMI), 165 to 185 (VGQL…GLGL), 213 to 233 (VSFI…ALYA), 247 to 267 (WFTV…ALLL), 276 to 296 (PFFL…AALA), 337 to 357 (IYIP…IVSF), 363 to 383 (LAAA…ILST), 396 to 416 (FVAL…TANL), and 419 to 439 (LLSG…VMTT).

This sequence belongs to the HAK/KUP transporter (TC 2.A.72) family.

It is found in the cell inner membrane. It catalyses the reaction K(+)(in) + H(+)(in) = K(+)(out) + H(+)(out). Functionally, responsible for the low-affinity transport of potassium into the cell. Likely operates as a K(+):H(+) symporter. The protein is Low affinity potassium transport system protein Kup of Escherichia coli O6:K15:H31 (strain 536 / UPEC).